The following is a 294-amino-acid chain: 4-hydroxy-tetrahydrodipicolinate synthase (294 aa).

Position 47 (threonine 47) interacts with pyruvate. Catalysis depends on tyrosine 136, which acts as the Proton donor/acceptor. Lysine 164 functions as the Schiff-base intermediate with substrate in the catalytic mechanism. Valine 206 lines the pyruvate pocket.

Belongs to the DapA family. In terms of assembly, homotetramer; dimer of dimers.

The protein localises to the cytoplasm. The enzyme catalyses L-aspartate 4-semialdehyde + pyruvate = (2S,4S)-4-hydroxy-2,3,4,5-tetrahydrodipicolinate + H2O + H(+). It participates in amino-acid biosynthesis; L-lysine biosynthesis via DAP pathway; (S)-tetrahydrodipicolinate from L-aspartate: step 3/4. In terms of biological role, catalyzes the condensation of (S)-aspartate-beta-semialdehyde [(S)-ASA] and pyruvate to 4-hydroxy-tetrahydrodipicolinate (HTPA). In Nostoc punctiforme (strain ATCC 29133 / PCC 73102), this protein is 4-hydroxy-tetrahydrodipicolinate synthase.